Here is a 169-residue protein sequence, read N- to C-terminus: Large ribosomal subunit protein uL10 (169 aa).

Belongs to the universal ribosomal protein uL10 family. Part of the ribosomal stalk of the 50S ribosomal subunit. The N-terminus interacts with L11 and the large rRNA to form the base of the stalk. The C-terminus forms an elongated spine to which L12 dimers bind in a sequential fashion forming a multimeric L10(L12)X complex.

Functionally, forms part of the ribosomal stalk, playing a central role in the interaction of the ribosome with GTP-bound translation factors. This chain is Large ribosomal subunit protein uL10, found in Deinococcus geothermalis (strain DSM 11300 / CIP 105573 / AG-3a).